A 309-amino-acid chain; its full sequence is Tagatose-6-phosphate kinase 1 (309 aa).

Belongs to the carbohydrate kinase PfkB family. LacC subfamily.

The enzyme catalyses D-tagatofuranose 6-phosphate + ATP = D-tagatofuranose 1,6-bisphosphate + ADP + H(+). Its pathway is carbohydrate metabolism; D-tagatose 6-phosphate degradation; D-glyceraldehyde 3-phosphate and glycerone phosphate from D-tagatose 6-phosphate: step 1/2. In Streptococcus agalactiae serotype III (strain NEM316), this protein is Tagatose-6-phosphate kinase 1.